Consider the following 362-residue polypeptide: E3 ubiquitin-protein ligase TM129 (362 aa).

Residues 1 to 6 (MDSPEV) are Lumenal-facing. Residues 7–27 (TFTLAYLVFAVCFVFTPTEFH) traverse the membrane as a helical segment. Residues 28-56 (SAGLTVQNLLSGWLGSEDAAFVPYHLRRT) lie on the Cytoplasmic side of the membrane. Residues 57–77 (AATLLCHSLLPLGYYVGMCFA) traverse the membrane as a helical segment. Topologically, residues 78-94 (ASEKQLYYPSQTPETWR) are lumenal. The chain crosses the membrane as a helical span at residues 95-115 (AFLLLALMLPAIACTLIYYWS). The Cytoplasmic portion of the chain corresponds to 116–362 (RDHWACHPLA…FCVLDVCAVR (247 aa)). Residues 285 to 350 (CIGCMQTQAS…ASRVPCPTCR (66 aa)) form an RING-type; degenerate zinc finger.

Belongs to the TMEM129 family. Integral component of ER-resident dislocation complexes.

The protein localises to the endoplasmic reticulum membrane. It carries out the reaction S-ubiquitinyl-[E2 ubiquitin-conjugating enzyme]-L-cysteine + [acceptor protein]-L-lysine = [E2 ubiquitin-conjugating enzyme]-L-cysteine + N(6)-ubiquitinyl-[acceptor protein]-L-lysine.. Its pathway is protein modification; protein ubiquitination. Its function is as follows. E3 ubiquitin-protein ligase involved in ER-associated protein degradation, preferentially associates with the E2 enzyme UBE2J2. Exploited by viral US11 proteins to mediate HLA class I proteins degradation. This Bos taurus (Bovine) protein is E3 ubiquitin-protein ligase TM129 (TMEM129).